Reading from the N-terminus, the 279-residue chain is Putative pyruvate, phosphate dikinase regulatory protein (279 aa).

ADP is bound at residue 153–160 (GVSRTSKT).

This sequence belongs to the pyruvate, phosphate/water dikinase regulatory protein family. PDRP subfamily.

It catalyses the reaction N(tele)-phospho-L-histidyl/L-threonyl-[pyruvate, phosphate dikinase] + ADP = N(tele)-phospho-L-histidyl/O-phospho-L-threonyl-[pyruvate, phosphate dikinase] + AMP + H(+). The catalysed reaction is N(tele)-phospho-L-histidyl/O-phospho-L-threonyl-[pyruvate, phosphate dikinase] + phosphate + H(+) = N(tele)-phospho-L-histidyl/L-threonyl-[pyruvate, phosphate dikinase] + diphosphate. Functionally, bifunctional serine/threonine kinase and phosphorylase involved in the regulation of the pyruvate, phosphate dikinase (PPDK) by catalyzing its phosphorylation/dephosphorylation. In Rhodopseudomonas palustris (strain HaA2), this protein is Putative pyruvate, phosphate dikinase regulatory protein.